A 348-amino-acid polypeptide reads, in one-letter code: Anthranilate phosphoribosyltransferase (348 aa).

5-phospho-alpha-D-ribose 1-diphosphate is bound by residues glycine 83, 86–87 (GD), threonine 91, 93–96 (NVST), 111–119 (KHGNRAASS), and threonine 123. Glycine 83 is a binding site for anthranilate. Serine 95 lines the Mg(2+) pocket. Asparagine 114 contributes to the anthranilate binding site. Arginine 169 contacts anthranilate. Positions 227 and 228 each coordinate Mg(2+).

This sequence belongs to the anthranilate phosphoribosyltransferase family. Homodimer. The cofactor is Mg(2+).

It catalyses the reaction N-(5-phospho-beta-D-ribosyl)anthranilate + diphosphate = 5-phospho-alpha-D-ribose 1-diphosphate + anthranilate. The protein operates within amino-acid biosynthesis; L-tryptophan biosynthesis; L-tryptophan from chorismate: step 2/5. Functionally, catalyzes the transfer of the phosphoribosyl group of 5-phosphorylribose-1-pyrophosphate (PRPP) to anthranilate to yield N-(5'-phosphoribosyl)-anthranilate (PRA). The protein is Anthranilate phosphoribosyltransferase of Thermobifida fusca (strain YX).